The chain runs to 220 residues: Demethylmenaquinone methyltransferase (220 aa).

S-adenosyl-L-methionine contacts are provided by residues threonine 47, aspartate 67, and 93–94 (DA).

It belongs to the class I-like SAM-binding methyltransferase superfamily. MenG/UbiE family.

It catalyses the reaction a 2-demethylmenaquinol + S-adenosyl-L-methionine = a menaquinol + S-adenosyl-L-homocysteine + H(+). The protein operates within quinol/quinone metabolism; menaquinone biosynthesis; menaquinol from 1,4-dihydroxy-2-naphthoate: step 2/2. Functionally, methyltransferase required for the conversion of demethylmenaquinol (DMKH2) to menaquinol (MKH2). The chain is Demethylmenaquinone methyltransferase from Thermus thermophilus (strain ATCC BAA-163 / DSM 7039 / HB27).